The following is a 276-amino-acid chain: Large ribosomal subunit protein uL2 (276 aa).

Disordered regions lie at residues 1–58 and 218–276; these read MAIR…GGGH and RPIT…KNRK. A compositionally biased stretch (polar residues) spans 16 to 27; sequence ASVSDFSDLTRS. The span at 255-276 shows a compositional bias: basic residues; that stretch reads RRPKKASNKMIVRRRPNGKNRK.

It belongs to the universal ribosomal protein uL2 family. Part of the 50S ribosomal subunit. Forms a bridge to the 30S subunit in the 70S ribosome.

Its function is as follows. One of the primary rRNA binding proteins. Required for association of the 30S and 50S subunits to form the 70S ribosome, for tRNA binding and peptide bond formation. It has been suggested to have peptidyltransferase activity; this is somewhat controversial. Makes several contacts with the 16S rRNA in the 70S ribosome. In Bifidobacterium animalis subsp. lactis (strain AD011), this protein is Large ribosomal subunit protein uL2.